Reading from the N-terminus, the 730-residue chain is Sodium-dependent neutral amino acid transporter B(0)AT2 (730 aa).

The disordered stretch occupies residues 1 to 24; sequence MPKNSKVVKRELDDDVTESVKDLL. The Extracellular segment spans residues 1 to 70; that stretch reads MPKNSKVVKR…RPAWSSKLQY (70 aa). Serine 25 and serine 55 each carry phosphoserine. A run of 3 helical transmembrane segments spans residues 71-91, 97-117, and 149-169; these read ILAQVGFSVGLGNVWRFPYLC, GAYLLPYLILLMVIGIPLFFL, and VVCYFVALYYNVIIGWSLFYF. Over 170-223 the chain is Cytoplasmic; sequence SQSFQQPLPWDQCPLVKNASHTFVEPECEQSSATTYYWYREALNISSSISESGG. 2 helical membrane-spanning segments follow: residues 224-244 and 253-273; these read LNWKMTICLLAAWVMVCLAMI and IIYFSSLFPYVVLICFLIRAL. N-linked (GlcNAc...) asparagine glycosylation is present at asparagine 276. The next 2 membrane-spanning stretches (helical) occupy residues 302–322 and 335–355; these read AATQVFFALGLGFGGVIAFSS and VLVSFINFFTSVLATLVVFAV. Over 356-458 the chain is Cytoplasmic; it reads LGFKANVINE…AMTHFPASPF (103 aa). Transmembrane regions (helical) follow at residues 459–479, 494–514, 530–550, 575–595, and 619–639; these read WSVMFFLMLVNLGLGSMFGTI, KEILTVICCLLAFCIGLIFVQ, TLPLLIVVILENIAVCFVYGI, YVSPLMLLSLLIASVVNMGLS, and LVVCVSLVVFAVLPVPVVFIV. Topologically, residues 640-730 are extracellular; the sequence is RRFNLIDDSS…IMPDMPESDL (91 aa). Phosphoserine is present on residues serine 687, serine 699, and serine 701.

The protein belongs to the sodium:neurotransmitter symporter (SNF) (TC 2.A.22) family. SLC6A15 subfamily.

It localises to the membrane. It catalyses the reaction L-leucine(in) + Na(+)(in) = L-leucine(out) + Na(+)(out). The enzyme catalyses L-isoleucine(in) + Na(+)(in) = L-isoleucine(out) + Na(+)(out). It carries out the reaction L-methionine(in) + Na(+)(in) = L-methionine(out) + Na(+)(out). The catalysed reaction is L-proline(in) + Na(+)(in) = L-proline(out) + Na(+)(out). It catalyses the reaction L-alanine(in) + Na(+)(in) = L-alanine(out) + Na(+)(out). The enzyme catalyses L-asparagine(in) + Na(+)(in) = L-asparagine(out) + Na(+)(out). It carries out the reaction L-valine(in) + Na(+)(in) = L-valine(out) + Na(+)(out). The catalysed reaction is L-cysteine(in) + Na(+)(in) = L-cysteine(out) + Na(+)(out). It catalyses the reaction L-glutamine(in) + Na(+)(in) = L-glutamine(out) + Na(+)(out). The enzyme catalyses L-serine(in) + Na(+)(in) = L-serine(out) + Na(+)(out). It carries out the reaction L-threonine(in) + Na(+)(in) = L-threonine(out) + Na(+)(out). The catalysed reaction is L-pipecolate(in) + Na(+)(in) = L-pipecolate(out) + Na(+)(out). It catalyses the reaction L-phenylalanine(in) + Na(+)(in) = L-phenylalanine(out) + Na(+)(out). Functions as a sodium-dependent neutral amino acid transporter. Exhibits preference for the branched-chain amino acids, particularly leucine, valine and isoleucine and methionine. Can also transport low-affinity substrates such as alanine, phenylalanine, glutamine and pipecolic acid. Mediates the saturable, pH-sensitive and electrogenic cotransport of proline and sodium ions with a stoichiometry of 1:1. May have a role as transporter for neurotransmitter precursors into neurons. In contrast to other members of the neurotransmitter transporter family, does not appear to be chloride-dependent. The protein is Sodium-dependent neutral amino acid transporter B(0)AT2 (SLC6A15) of Pongo abelii (Sumatran orangutan).